The following is a 267-amino-acid chain: Hydroxyethylthiazole kinase (267 aa).

Residue Met46 coordinates substrate. Residues Arg122 and Ser168 each coordinate ATP. Residue Gly195 participates in substrate binding.

This sequence belongs to the Thz kinase family. Mg(2+) is required as a cofactor.

The enzyme catalyses 5-(2-hydroxyethyl)-4-methylthiazole + ATP = 4-methyl-5-(2-phosphooxyethyl)-thiazole + ADP + H(+). It functions in the pathway cofactor biosynthesis; thiamine diphosphate biosynthesis; 4-methyl-5-(2-phosphoethyl)-thiazole from 5-(2-hydroxyethyl)-4-methylthiazole: step 1/1. Functionally, catalyzes the phosphorylation of the hydroxyl group of 4-methyl-5-beta-hydroxyethylthiazole (THZ). The sequence is that of Hydroxyethylthiazole kinase from Nitratidesulfovibrio vulgaris (strain DSM 19637 / Miyazaki F) (Desulfovibrio vulgaris).